A 272-amino-acid chain; its full sequence is Imidazole glycerol phosphate synthase subunit HisF (272 aa).

Residues D11 and D130 contribute to the active site.

Belongs to the HisA/HisF family. Heterodimer of HisH and HisF.

The protein localises to the cytoplasm. It catalyses the reaction 5-[(5-phospho-1-deoxy-D-ribulos-1-ylimino)methylamino]-1-(5-phospho-beta-D-ribosyl)imidazole-4-carboxamide + L-glutamine = D-erythro-1-(imidazol-4-yl)glycerol 3-phosphate + 5-amino-1-(5-phospho-beta-D-ribosyl)imidazole-4-carboxamide + L-glutamate + H(+). It participates in amino-acid biosynthesis; L-histidine biosynthesis; L-histidine from 5-phospho-alpha-D-ribose 1-diphosphate: step 5/9. In terms of biological role, IGPS catalyzes the conversion of PRFAR and glutamine to IGP, AICAR and glutamate. The HisF subunit catalyzes the cyclization activity that produces IGP and AICAR from PRFAR using the ammonia provided by the HisH subunit. The sequence is that of Imidazole glycerol phosphate synthase subunit HisF from Methanococcus maripaludis (strain C7 / ATCC BAA-1331).